A 292-amino-acid chain; its full sequence is Protease HtpX (292 aa).

The next 2 membrane-spanning stretches (helical) occupy residues 5 to 25 and 35 to 55; these read VVLF…VMSV and GLLV…LLLS. Residue H140 coordinates Zn(2+). E141 is a catalytic residue. Position 144 (H144) interacts with Zn(2+). 2 helical membrane-spanning segments follow: residues 155–175 and 193–213; these read LLQG…GGII and IIVF…AMWF. E218 serves as a coordination point for Zn(2+).

It belongs to the peptidase M48B family. It depends on Zn(2+) as a cofactor.

The protein resides in the cell inner membrane. This chain is Protease HtpX, found in Xanthomonas campestris pv. campestris (strain 8004).